We begin with the raw amino-acid sequence, 99 residues long: Putative transmembrane protein ORF13 (99 aa).

A run of 3 helical transmembrane segments spans residues 8–28 (IATF…MAGI), 42–62 (LGLF…YIIV), and 73–93 (GPIT…AIIA).

It is found in the host membrane. The polypeptide is Putative transmembrane protein ORF13 (His1 virus (isolate Australia/Victoria) (His1V)).